The chain runs to 434 residues: Glutamate-1-semialdehyde 2,1-aminomutase (434 aa).

K266 carries the post-translational modification N6-(pyridoxal phosphate)lysine.

Belongs to the class-III pyridoxal-phosphate-dependent aminotransferase family. HemL subfamily. Homodimer. Pyridoxal 5'-phosphate is required as a cofactor.

It is found in the cytoplasm. It catalyses the reaction (S)-4-amino-5-oxopentanoate = 5-aminolevulinate. It functions in the pathway porphyrin-containing compound metabolism; protoporphyrin-IX biosynthesis; 5-aminolevulinate from L-glutamyl-tRNA(Glu): step 2/2. This Fusobacterium nucleatum subsp. nucleatum (strain ATCC 25586 / DSM 15643 / BCRC 10681 / CIP 101130 / JCM 8532 / KCTC 2640 / LMG 13131 / VPI 4355) protein is Glutamate-1-semialdehyde 2,1-aminomutase.